Here is a 101-residue protein sequence, read N- to C-terminus: MTTNNLVLAGTITRSRQFDSPAGIAHTVVMLEHKSQRYEAGMLRNVYCQIQVVLSGERFNGVAKNLTAGVEIQVEGFINLQQSRNGQNRLVLHAENVELKT.

The SSB domain maps to 1–101; the sequence is MTTNNLVLAG…LHAENVELKT (101 aa).

Belongs to the PriB family. In terms of assembly, homodimer. Interacts with PriA and DnaT. Component of the replication restart primosome. Primosome assembly occurs via a 'hand-off' mechanism. PriA binds to replication forks, subsequently PriB then DnaT bind; DnaT then displaces ssDNA to generate the helicase loading substrate.

Involved in the restart of stalled replication forks, which reloads the replicative helicase on sites other than the origin of replication; the PriA-PriB pathway is the major replication restart pathway. During primosome assembly it facilitates complex formation between PriA and DnaT on DNA; stabilizes PriA on DNA. Stimulates the DNA unwinding activity of PriA helicase. The chain is Replication restart protein PriB from Shewanella pealeana (strain ATCC 700345 / ANG-SQ1).